Consider the following 245-residue polypeptide: Ribonuclease PH (245 aa).

Residues Arg86 and 124 to 126 (GTR) contribute to the phosphate site.

The protein belongs to the RNase PH family. In terms of assembly, homohexameric ring arranged as a trimer of dimers. It has been suggested that the active form is the dimer which binds tRNA and that the hexameric form protects the substrate recognition loop (approximately residues 65-82) from proteolysis.

The catalysed reaction is tRNA(n+1) + phosphate = tRNA(n) + a ribonucleoside 5'-diphosphate. Its function is as follows. Phosphorolytic 3'-5' exoribonuclease that plays an important role in tRNA 3'-end maturation. Removes nucleotide residues following the 3'-CCA terminus of tRNAs; can also add nucleotides to the ends of RNA molecules by using nucleoside diphosphates as substrates, but this may not be physiologically important. Probably plays a role in initiation of 16S rRNA degradation (leading to ribosome degradation) during starvation. Plays a role in the secondary pathway of 23S rRNA 3' end maturation. The sequence is that of Ribonuclease PH from Bacillus subtilis (strain 168).